A 450-amino-acid chain; its full sequence is tRNA modification GTPase MnmE (450 aa).

3 residues coordinate (6S)-5-formyl-5,6,7,8-tetrahydrofolate: Arg-21, Glu-80, and Lys-119. The TrmE-type G domain occupies 213-373; that stretch reads GIKVVIIGKP…LEEEIIKSVK (161 aa). Asn-223 contributes to the K(+) binding site. GTP is bound by residues 223-228, 242-248, and 267-270; these read NVGKST, TDIPGTT, and DTAG. Ser-227 contributes to the Mg(2+) binding site. K(+)-binding residues include Thr-242, Ile-244, and Thr-247. Thr-248 contacts Mg(2+). Lys-450 lines the (6S)-5-formyl-5,6,7,8-tetrahydrofolate pocket.

Belongs to the TRAFAC class TrmE-Era-EngA-EngB-Septin-like GTPase superfamily. TrmE GTPase family. Homodimer. Heterotetramer of two MnmE and two MnmG subunits. K(+) is required as a cofactor.

It localises to the cytoplasm. Its function is as follows. Exhibits a very high intrinsic GTPase hydrolysis rate. Involved in the addition of a carboxymethylaminomethyl (cmnm) group at the wobble position (U34) of certain tRNAs, forming tRNA-cmnm(5)s(2)U34. The polypeptide is tRNA modification GTPase MnmE (Pseudothermotoga lettingae (strain ATCC BAA-301 / DSM 14385 / NBRC 107922 / TMO) (Thermotoga lettingae)).